The sequence spans 806 residues: Leucine--tRNA ligase (806 aa).

Positions 40–51 match the 'HIGH' region motif; sequence PYPSGKGLHVGH. Residues 580–584 carry the 'KMSKS' region motif; that stretch reads KMSKS. Lysine 583 is an ATP binding site.

It belongs to the class-I aminoacyl-tRNA synthetase family.

Its subcellular location is the cytoplasm. The catalysed reaction is tRNA(Leu) + L-leucine + ATP = L-leucyl-tRNA(Leu) + AMP + diphosphate. The sequence is that of Leucine--tRNA ligase from Ureaplasma parvum serovar 3 (strain ATCC 27815 / 27 / NCTC 11736).